Here is a 1143-residue protein sequence, read N- to C-terminus: MSSDDNNIASSASSGHGAWIYITEKTPDVLDILNRLVLTSADSDVTIAPLLYDVTVEPGFELTVKCPLMLTDNNVILKLSNFMPCVFIINSTSSEDFRFCEDVVGNVSEICEGAASRYGYTADFTEFNERTETTDSDVCSNVNVPESDYFVYIACTYGYKELLFKGYLIPHWQDLRDISIGNRRGYKIPLLSPFLFTQCKDDTVQLTDQFILDNGFYNPDLTKTLYSYIFRPLAVSLRYLDVTHLISVTLNQYITDTHATAKLCDKKVYTCHGNNKLSTGDRDVLALCDILANEVTVSYLTPFLDSAYDAPSTLDFYSWPIVKDKTHAEILENLDQFLLHMSVHIGTLIFSGNSVLYQNKISKVGGQSDGSNGQSVEGLLKSIYHTTGIQLLYEDGYDDTRSLVRQHTAKPKNLKFNMDHLSFGASFSSHVLTKIVWFLNRSEEYKTTQSVSSTCYLVINSSTGTCTACDGKHCNTCIGALMCRMATRFPNINRQQKKEPCVTTLLTRMFADMTILGSFGKKYNTERDTQQKDGRVSAEPLDKAKYVLNILDYCKRECLIDSDGNDTLKISSKQEFIKIITGLNRTIDDELIKLLSDMRKHSNAKDDLNNSTMSFTLDLNPHAYAFSPLLQFVYMKTLVNILESLAIVVIAEKISSYPMTQSAYSRWVKQHFQSVYSEFKKSIYKKGFLTLSDYKMKNTTTNDTFTDFSHLKRDYKIDNTVRSSIATVNYQCRLWNFHVSSLRDFRIKYKPIPKNKDSPYFQKADKGIQNPVCGPLSFLITRFHKDIFPNVNVSPMTLWQRIYSNTLKNFNVDLGDKHDVETFIKFMFEQTVEYEGSNSIDVRPETILQYIEFRFVNRLLHASGHRGQYIGIVQALCTTLSDTKVDGLPCYLDSSRTFGTVSEYHAYCREYNGTVKVGRTRPYCNTNGMFERRPLVTVPYALEKYTGAAGNASIFQCGQLGYFSGTGIDRNLGMINRTSDYNFMRRKHIFCTPLTDVLFTKISRGAHVFDFDMLKQRIKQLLDEHCGGFDIELAILSEILKHVKEPNYNDLLFITGYQEHIASSLFDKIKVLDELEISSYSIESLQEIFPEKEELNDTEATGSGYDFSFIIPKATDVDEITGLNIQEFTNIEDETPLVKRMRL.

Residues 1140–1143 (RMRL) are required for nuclear localization.

It belongs to the herpesviridae major DNA-binding protein family. Homooligomers. Forms double-helical filaments necessary for the formation of replication compartments within the host nucleus. Interacts with the origin-binding protein. Interacts with the helicase primase complex; this interaction stimulates primer synthesis activity of the helicase-primase complex. Interacts with the DNA polymerase. Interacts with the alkaline exonuclease; this interaction increases its nuclease processivity.

It localises to the host nucleus. Functionally, plays several crucial roles in viral infection. Participates in the opening of the viral DNA origin to initiate replication by interacting with the origin-binding protein. May disrupt loops, hairpins and other secondary structures present on ssDNA to reduce and eliminate pausing of viral DNA polymerase at specific sites during elongation. Promotes viral DNA recombination by performing strand-transfer, characterized by the ability to transfer a DNA strand from a linear duplex to a complementary single-stranded DNA circle. Can also catalyze the renaturation of complementary single strands. Additionally, reorganizes the host cell nucleus, leading to the formation of prereplicative sites and replication compartments. This process is driven by the protein which can form double-helical filaments in the absence of DNA. This is Major DNA-binding protein from Elephantid herpesvirus 1 (isolate Asian elephant/Berlin/Kiba/1998) (EIHV-1).